An 863-amino-acid chain; its full sequence is Glycogen phosphorylase (863 aa).

Residue lysine 618 is modified to N6-(pyridoxal phosphate)lysine.

Belongs to the glycogen phosphorylase family. Requires pyridoxal 5'-phosphate as cofactor.

It carries out the reaction [(1-&gt;4)-alpha-D-glucosyl](n) + phosphate = [(1-&gt;4)-alpha-D-glucosyl](n-1) + alpha-D-glucose 1-phosphate. Functionally, phosphorylase is an important allosteric enzyme in carbohydrate metabolism. Enzymes from different sources differ in their regulatory mechanisms and in their natural substrates. However, all known phosphorylases share catalytic and structural properties. The chain is Glycogen phosphorylase (glgP) from Mycobacterium bovis (strain ATCC BAA-935 / AF2122/97).